Reading from the N-terminus, the 164-residue chain is UPF0114 protein YqhA (164 aa).

Transmembrane regions (helical) follow at residues Leu-15–Phe-35, Leu-53–Val-73, and Leu-136–Leu-156.

This sequence belongs to the UPF0114 family.

The protein localises to the cell membrane. This chain is UPF0114 protein YqhA, found in Escherichia coli O139:H28 (strain E24377A / ETEC).